A 294-amino-acid polypeptide reads, in one-letter code: N-acetylmuramic acid 6-phosphate etherase (294 aa).

The SIS domain maps to 54 to 217; the sequence is VIASFRKGGR…STTSMIGVGK (164 aa). The Proton donor role is filled by Glu82. The active site involves Glu113.

The protein belongs to the GCKR-like family. MurNAc-6-P etherase subfamily. In terms of assembly, homodimer.

It carries out the reaction N-acetyl-D-muramate 6-phosphate + H2O = N-acetyl-D-glucosamine 6-phosphate + (R)-lactate. It functions in the pathway amino-sugar metabolism; N-acetylmuramate degradation. Functionally, specifically catalyzes the cleavage of the D-lactyl ether substituent of MurNAc 6-phosphate, producing GlcNAc 6-phosphate and D-lactate. The polypeptide is N-acetylmuramic acid 6-phosphate etherase (Exiguobacterium sp. (strain ATCC BAA-1283 / AT1b)).